The following is a 111-amino-acid chain: Tubulin beta chain (111 aa).

The disordered stretch occupies residues 82–111; sequence SEYQQYQDATAEDEGEFDEEEAEGEGQEYA. Over residues 91–111 the composition is skewed to acidic residues; that stretch reads TAEDEGEFDEEEAEGEGQEYA.

This sequence belongs to the tubulin family. In terms of assembly, dimer of alpha and beta chains. A typical microtubule is a hollow water-filled tube with an outer diameter of 25 nm and an inner diameter of 15 nM. Alpha-beta heterodimers associate head-to-tail to form protofilaments running lengthwise along the microtubule wall with the beta-tubulin subunit facing the microtubule plus end conferring a structural polarity. Microtubules usually have 13 protofilaments but different protofilament numbers can be found in some organisms and specialized cells. Requires Mg(2+) as cofactor.

The protein resides in the cytoplasm. The protein localises to the cytoskeleton. Functionally, tubulin is the major constituent of microtubules, a cylinder consisting of laterally associated linear protofilaments composed of alpha- and beta-tubulin heterodimers. Microtubules grow by the addition of GTP-tubulin dimers to the microtubule end, where a stabilizing cap forms. Below the cap, tubulin dimers are in GDP-bound state, owing to GTPase activity of alpha-tubulin. This is Tubulin beta chain from Lymnaea stagnalis (Great pond snail).